The chain runs to 184 residues: Ribosome-recycling factor (184 aa).

The protein belongs to the RRF family.

It localises to the cytoplasm. Functionally, responsible for the release of ribosomes from messenger RNA at the termination of protein biosynthesis. May increase the efficiency of translation by recycling ribosomes from one round of translation to another. The sequence is that of Ribosome-recycling factor from Stenotrophomonas maltophilia (strain K279a).